The primary structure comprises 267 residues: Undecaprenyl-diphosphatase (267 aa).

7 consecutive transmembrane segments (helical) span residues 7–29 (LILGIIEGLTEFLPVSSTGHMIL), 41–61 (FWKSFLIIIQLGSILAVIFVF), 69–89 (LDIWLKLAAGFFPTGVIGLFV), 96–116 (LFNGWVVVGMLIFGGVVFILI), 173–193 (AAEFSFLLAIPTMIIATAYSI), 207–227 (IPLGIGFITAFVVAVLVIKFF), and 239–259 (FGIYRIILGFVFFYLYYSGIL).

This sequence belongs to the UppP family.

The protein localises to the cell inner membrane. The enzyme catalyses di-trans,octa-cis-undecaprenyl diphosphate + H2O = di-trans,octa-cis-undecaprenyl phosphate + phosphate + H(+). Functionally, catalyzes the dephosphorylation of undecaprenyl diphosphate (UPP). Confers resistance to bacitracin. This chain is Undecaprenyl-diphosphatase, found in Campylobacter jejuni subsp. jejuni serotype O:6 (strain 81116 / NCTC 11828).